Consider the following 155-residue polypeptide: MRIGLGYDVHKLVENRPLIIGGVTIPHDKGLLGHSDADVLVHAIMDALLGAAALGDIGKHFPDSDKNFKNISSLLLLSKVKDLINKEGYKIVNIDCTIIAQKPKMLYHINAMKKNICKCLKLDNNMLNIKATTEEGLGFTGKEEGISANAICLLD.

A divalent metal cation-binding residues include Asp-8 and His-10. Residues 8 to 10 (DVH) and 34 to 35 (HS) contribute to the 4-CDP-2-C-methyl-D-erythritol 2-phosphate site. His-42 contributes to the a divalent metal cation binding site. Residues 56–58 (DIG), 61–65 (FPDSD), 100–106 (AQKPKML), 132–135 (TTEE), Phe-139, and Lys-142 each bind 4-CDP-2-C-methyl-D-erythritol 2-phosphate.

Belongs to the IspF family. In terms of assembly, homotrimer. Requires a divalent metal cation as cofactor.

The enzyme catalyses 4-CDP-2-C-methyl-D-erythritol 2-phosphate = 2-C-methyl-D-erythritol 2,4-cyclic diphosphate + CMP. Its pathway is isoprenoid biosynthesis; isopentenyl diphosphate biosynthesis via DXP pathway; isopentenyl diphosphate from 1-deoxy-D-xylulose 5-phosphate: step 4/6. Functionally, involved in the biosynthesis of isopentenyl diphosphate (IPP) and dimethylallyl diphosphate (DMAPP), two major building blocks of isoprenoid compounds. Catalyzes the conversion of 4-diphosphocytidyl-2-C-methyl-D-erythritol 2-phosphate (CDP-ME2P) to 2-C-methyl-D-erythritol 2,4-cyclodiphosphate (ME-CPP) with a corresponding release of cytidine 5-monophosphate (CMP). The protein is 2-C-methyl-D-erythritol 2,4-cyclodiphosphate synthase of Clostridium botulinum (strain Okra / Type B1).